The chain runs to 80 residues: Clavanin-C (80 aa).

The N-terminal stretch at 1-19 (MKTTILILLILGLGINAKS) is a signal peptide. The propeptide occupies 20-29 (LEERKSEEEK). Residue Phe-52 is modified to Phenylalanine amide. The propeptide occupies 54-80 (DDQQDNGKFYGHYAEDNGKHWYDTGDQ).

Hemocytes and pharyngeal tissues.

Its subcellular location is the secreted. Its function is as follows. Has antimicrobial activity against E.coli, L.monocytogenes and C.albicans. This chain is Clavanin-C, found in Styela clava (Sea squirt).